A 444-amino-acid chain; its full sequence is Jacalin-related lectin 11 (444 aa).

At Ala-2 the chain carries N-acetylalanine. 3 consecutive Jacalin-type lectin domains span residues 2 to 143 (ALKV…YFIK), 146 to 290 (SIQS…YYAP), and 298 to 442 (PEKL…HVTA).

It belongs to the jacalin lectin family.

The polypeptide is Jacalin-related lectin 11 (JAL11) (Arabidopsis thaliana (Mouse-ear cress)).